Consider the following 457-residue polypeptide: tRNA-2-methylthio-N(6)-dimethylallyladenosine synthase (457 aa).

One can recognise an MTTase N-terminal domain in the interval 2 to 119 (KKVFIKTFGC…LPELIDARRR (118 aa)). Cys-11, Cys-48, Cys-82, Cys-156, Cys-160, and Cys-163 together coordinate [4Fe-4S] cluster. The Radical SAM core domain occupies 142-375 (RVEGPSAFVS…QATIDANMAR (234 aa)). One can recognise a TRAM domain in the interval 378–448 (EGMVGSVQRI…PHSLRGDVVE (71 aa)).

It belongs to the methylthiotransferase family. MiaB subfamily. Monomer. [4Fe-4S] cluster serves as cofactor.

Its subcellular location is the cytoplasm. It carries out the reaction N(6)-dimethylallyladenosine(37) in tRNA + (sulfur carrier)-SH + AH2 + 2 S-adenosyl-L-methionine = 2-methylsulfanyl-N(6)-dimethylallyladenosine(37) in tRNA + (sulfur carrier)-H + 5'-deoxyadenosine + L-methionine + A + S-adenosyl-L-homocysteine + 2 H(+). In terms of biological role, catalyzes the methylthiolation of N6-(dimethylallyl)adenosine (i(6)A), leading to the formation of 2-methylthio-N6-(dimethylallyl)adenosine (ms(2)i(6)A) at position 37 in tRNAs that read codons beginning with uridine. This is tRNA-2-methylthio-N(6)-dimethylallyladenosine synthase from Ralstonia nicotianae (strain ATCC BAA-1114 / GMI1000) (Ralstonia solanacearum).